Reading from the N-terminus, the 1192-residue chain is Pyruvate carboxylase (1192 aa).

Residues 1 to 23 (MAAPRQPEEAVDDTEFIDDHHDQ) form a disordered region. In terms of domain architecture, Biotin carboxylation spans 40-492 (QFQKILVANR…WTTFIDDTPE (453 aa)). ATP-binding residues include K158, E242, and H277. An ATP-grasp domain is found at 162 to 359 (RQLAIRCDVP…IVAAQIQIAA (198 aa)). R334 is a catalytic residue. Positions 578–846 (CLIMDTTWRD…DPGLNSAQVR (269 aa)) constitute a Pyruvate carboxyltransferase domain. Substrate is bound by residues 586–590 (RDAHQ) and R659. Position 587 (D587) interacts with a divalent metal cation. 3 residues coordinate a divalent metal cation: K755, H785, and H787. Position 755 is an N6-carboxylysine (K755). Residue T920 participates in substrate binding. Residues 1115-1190 (KAELGDSSQV…DGQDLVCKIV (76 aa)) enclose the Biotinyl-binding domain. K1156 is subject to N6-biotinyllysine.

Biotin serves as cofactor. Zn(2+) is required as a cofactor.

It localises to the cytoplasm. It catalyses the reaction hydrogencarbonate + pyruvate + ATP = oxaloacetate + ADP + phosphate + H(+). It functions in the pathway carbohydrate biosynthesis; gluconeogenesis. Pyruvate carboxylase catalyzes a 2-step reaction, involving the ATP-dependent carboxylation of the covalently attached biotin in the first step and the transfer of the carboxyl group to pyruvate in the second. This chain is Pyruvate carboxylase (pyc), found in Aspergillus niger.